The sequence spans 1620 residues: ALK tyrosine kinase receptor (1620 aa).

The signal sequence occupies residues 1-18 (MGAIGLLWLLPLLLSTAA). Topologically, residues 19-1038 (VGSGMGTGQR…PHLPLSLILS (1020 aa)) are extracellular. The tract at residues 48-70 (RLQRKSLAVDFVVPSLFRVYARD) is heparin-binding region. Asparagine 169, asparagine 244, asparagine 285, asparagine 324, asparagine 411, asparagine 424, asparagine 445, asparagine 563, asparagine 571, and asparagine 627 each carry an N-linked (GlcNAc...) asparagine glycan. Positions 264–427 (LECSFDFPCE…DFFALKNCSE (164 aa)) constitute an MAM 1 domain. The LDL-receptor class A domain occupies 437 to 473 (LQSSFTCWNGTVLQLGQACDFHQDCAQGEDESQMCRK). One can recognise an MAM 2 domain in the interval 478–636 (FYCNFEDGFC…NISISLDCYL (159 aa)). The interval 650–674 (PKSRNLFERNPNKELKPGENSPRQT) is disordered. The span at 654–666 (NLFERNPNKELKP) shows a compositional bias: basic and acidic residues. Cysteine 688 and cysteine 701 form a disulfide bridge. Asparagine 709 is a glycosylation site (N-linked (GlcNAc...) asparagine). A disulfide bridge connects residues cysteine 783 and cysteine 794. Residues asparagine 808, asparagine 863, asparagine 864, and asparagine 886 are each glycosylated (N-linked (GlcNAc...) asparagine). A disulfide bridge connects residues cysteine 906 and cysteine 928. Asparagine 986 carries an N-linked (GlcNAc...) asparagine glycan. 3 disulfides stabilise this stretch: cysteine 987/cysteine 995, cysteine 990/cysteine 1006, and cysteine 1008/cysteine 1021. Residues 987–1025 (CSHCEVDECHMDPESHKVICFCDHGTVLAEDGVSCIVSP) are EGF-like. Residues 1039–1059 (VVTSALVAALVLAFSGIMIVY) traverse the membrane as a helical segment. The Cytoplasmic segment spans residues 1060-1620 (RRKHQELQAM…SKNSMNQPGP (561 aa)). A phosphotyrosine mark is found at tyrosine 1078, tyrosine 1092, and tyrosine 1096. Residues 1116–1392 (ITLIRGLGHG…IEYCTQDPDV (277 aa)) enclose the Protein kinase domain. An ATP-binding site is contributed by histidine 1124. Tyrosine 1131 carries the phosphotyrosine modification. Residues lysine 1150 and 1197–1199 (ELM) each bind ATP. Aspartate 1249 serves as the catalytic Proton acceptor. Aspartate 1270 is a binding site for ATP. Tyrosine 1278 is modified (phosphotyrosine). Positions 1408–1463 (EEKVPVRPKDPEGVPPLLVSQQAKREEERSPAAPPPLPTTSSGKAAKKPTAAEISV) are disordered. The span at 1410-1419 (KVPVRPKDPE) shows a compositional bias: basic and acidic residues. Position 1507 is a phosphotyrosine (tyrosine 1507). The disordered stretch occupies residues 1514–1540 (KPTKKNNPIAKKEPHDRGNLGLEGSCT). Residue tyrosine 1604 is modified to Phosphotyrosine.

Belongs to the protein kinase superfamily. Tyr protein kinase family. Insulin receptor subfamily. As to quaternary structure, homodimer; homodimerizes following heparin- and ligand-binding. Interacts with CBL, IRS1, PIK3R1 and PLCG1. Interacts with FRS2 and SHC1. Interacts with PTN and MDK. In terms of processing, phosphorylated at tyrosine residues by autocatalysis, which activates kinase activity. In cells not stimulated by a ligand, receptor protein tyrosine phosphatase beta and zeta complex (PTPRB/PTPRZ1) dephosphorylates ALK at the sites in ALK that are undergoing autophosphorylation through autoactivation. Phosphorylation at Tyr-1507 is critical for SHC1 association. Post-translationally, N-glycosylated. Expressed in brain and CNS. Also expressed in the small intestine and testis, but not in normal lymphoid cells.

The protein localises to the cell membrane. It catalyses the reaction L-tyrosyl-[protein] + ATP = O-phospho-L-tyrosyl-[protein] + ADP + H(+). Its activity is regulated as follows. Activated upon ALKAL2 ligand-binding. ALKAL2-driven activation is coupled with heparin-binding. Following ligand-binding, homodimerizes and autophosphorylates, activating its kinase activity. Inactivated through dephosphorylation by receptor protein tyrosine phosphatase beta and zeta complex (PTPRB/PTPRZ1) when there is no stimulation by a ligand. Staurosporine, crizotinib and CH5424802 act as inhibitors of ALK kinase activity. Neuronal receptor tyrosine kinase that is essentially and transiently expressed in specific regions of the central and peripheral nervous systems and plays an important role in the genesis and differentiation of the nervous system. Also acts as a key thinness protein involved in the resistance to weight gain: in hypothalamic neurons, controls energy expenditure acting as a negative regulator of white adipose tissue lipolysis and sympathetic tone to fine-tune energy homeostasis. Following activation by ALKAL2 ligand at the cell surface, transduces an extracellular signal into an intracellular response. In contrast, ALKAL1 is not a potent physiological ligand for ALK. Ligand-binding to the extracellular domain induces tyrosine kinase activation, leading to activation of the mitogen-activated protein kinase (MAPK) pathway. Phosphorylates almost exclusively at the first tyrosine of the Y-x-x-x-Y-Y motif. Induces tyrosine phosphorylation of CBL, FRS2, IRS1 and SHC1, as well as of the MAP kinases MAPK1/ERK2 and MAPK3/ERK1. ALK activation may also be regulated by pleiotrophin (PTN) and midkine (MDK). PTN-binding induces MAPK pathway activation, which is important for the anti-apoptotic signaling of PTN and regulation of cell proliferation. MDK-binding induces phosphorylation of the ALK target insulin receptor substrate (IRS1), activates mitogen-activated protein kinases (MAPKs) and PI3-kinase, resulting also in cell proliferation induction. Drives NF-kappa-B activation, probably through IRS1 and the activation of the AKT serine/threonine kinase. Recruitment of IRS1 to activated ALK and the activation of NF-kappa-B are essential for the autocrine growth and survival signaling of MDK. This chain is ALK tyrosine kinase receptor, found in Homo sapiens (Human).